Reading from the N-terminus, the 931-residue chain is Chitin synthase 7 (931 aa).

Disordered stretches follow at residues 1-34 and 56-92; these read MVRH…GHYR and GDVG…ASSS. Polar residues-rich tracts occupy residues 7-28 and 83-92; these read FTNS…TPYP and PLTTGPASSS. N-linked (GlcNAc...) asparagine glycosylation occurs at asparagine 536. 3 consecutive transmembrane segments (helical) span residues 573–593, 615–635, and 647–667; these read IFSL…FSII, INLV…VLAL, and ILTL…SIIL. A glycan (N-linked (GlcNAc...) asparagine) is linked at asparagine 691. The next 2 membrane-spanning stretches (helical) occupy residues 695 to 715 and 725 to 745; these read GVLV…SFLY and FPQY…YAFC. Positions 763 to 789 are disordered; that stretch reads LPAISSSKQKDGETAVVEEQQRSQGEL. Asparagine 819 carries N-linked (GlcNAc...) asparagine glycosylation. The helical transmembrane segment at 826 to 846 threads the bilayer; it reads LVVVWLLTNAALAISIQTLNG. 2 N-linked (GlcNAc...) asparagine glycosylation sites follow: asparagine 866 and asparagine 874. A helical membrane pass occupies residues 899-919; it reads AILWTTFALSMVRFIGCVFYW.

The protein belongs to the chitin synthase family. Class III subfamily.

It localises to the cell membrane. The catalysed reaction is [(1-&gt;4)-N-acetyl-beta-D-glucosaminyl](n) + UDP-N-acetyl-alpha-D-glucosamine = [(1-&gt;4)-N-acetyl-beta-D-glucosaminyl](n+1) + UDP + H(+). Functionally, polymerizes chitin, a structural polymer of the cell wall and septum, by transferring the sugar moiety of UDP-GlcNAc to the non-reducing end of the growing chitin polymer. The protein is Chitin synthase 7 of Cryptococcus neoformans var. grubii serotype A (strain H99 / ATCC 208821 / CBS 10515 / FGSC 9487) (Filobasidiella neoformans var. grubii).